A 499-amino-acid chain; its full sequence is uncharacterized protein (499 aa).

A run of 11 helical transmembrane segments spans residues 5-25 (FLLV…YNAV), 79-99 (LGLR…TYLL), 110-130 (ALLS…ARYA), 132-152 (PEVP…EYFT), 170-190 (VLTK…FYLL), 203-223 (YAGT…QYLV), 252-272 (ALDI…ALFW), 286-306 (VWFS…PVYI), 332-352 (LSLI…SLYF), 354-374 (FSAT…LKKY), and 377-397 (LPAF…LPYV).

The protein belongs to the glycosyltransferase 39 family.

Its subcellular location is the cell membrane. This is an uncharacterized protein from Aquifex aeolicus (strain VF5).